We begin with the raw amino-acid sequence, 202 residues long: MSNPLRVGVGGPVGSGKTALLEWLCREMQQHYSVAAITNDIYTKEDQRILTASGALPAERIMGVETGGCPHTAIREDASMNLAAVEDMQLRFADLELIFIESGGDNLAATFSPELADLTLYVIDVAAGEKIPRKGGPGITRSDLLVINKTDLAPLVGADLAVMEQDTLRMRGSRPFVFTNLKQGDGVAAIIQFLVEKGGLGV.

Residue 11 to 18 (GPVGSGKT) coordinates GTP.

Belongs to the SIMIBI class G3E GTPase family. UreG subfamily. Homodimer. UreD, UreF and UreG form a complex that acts as a GTP-hydrolysis-dependent molecular chaperone, activating the urease apoprotein by helping to assemble the nickel containing metallocenter of UreC. The UreE protein probably delivers the nickel.

The protein resides in the cytoplasm. Its function is as follows. Facilitates the functional incorporation of the urease nickel metallocenter. This process requires GTP hydrolysis, probably effectuated by UreG. This chain is Urease accessory protein UreG, found in Magnetococcus marinus (strain ATCC BAA-1437 / JCM 17883 / MC-1).